Here is a 339-residue protein sequence, read N- to C-terminus: Arylacetonitrilase (339 aa).

In terms of domain architecture, CN hydrolase spans 5–290 (IRVAVTQAEP…EGIVYADLDL (286 aa)). Glu45 acts as the Proton acceptor in catalysis. The active site involves Lys126. Cys167 (nucleophile) is an active-site residue.

Belongs to the carbon-nitrogen hydrolase superfamily. Nitrilase family.

It carries out the reaction a nitrile + 2 H2O = a carboxylate + NH4(+). It catalyses the reaction 4-chlorophenylacetonitrile + 2 H2O = 4-chlorophenylacetate + NH4(+). In terms of biological role, nitrilase that hydrolyzes preferentially phenylacetonitrile, (R,S)-mandelonitrile, and 3-indolylacetonitrile. In Fusarium vanettenii (strain ATCC MYA-4622 / CBS 123669 / FGSC 9596 / NRRL 45880 / 77-13-4) (Fusarium solani subsp. pisi), this protein is Arylacetonitrilase.